We begin with the raw amino-acid sequence, 191 residues long: dTTP/UTP pyrophosphatase (191 aa).

Asp-71 (proton acceptor) is an active-site residue.

It belongs to the Maf family. YhdE subfamily. Requires a divalent metal cation as cofactor.

Its subcellular location is the cytoplasm. It carries out the reaction dTTP + H2O = dTMP + diphosphate + H(+). The catalysed reaction is UTP + H2O = UMP + diphosphate + H(+). Functionally, nucleoside triphosphate pyrophosphatase that hydrolyzes dTTP and UTP. May have a dual role in cell division arrest and in preventing the incorporation of modified nucleotides into cellular nucleic acids. This chain is dTTP/UTP pyrophosphatase, found in Hyphomonas neptunium (strain ATCC 15444).